Consider the following 322-residue polypeptide: Transmembrane protein 171 (322 aa).

Transmembrane regions (helical) follow at residues 22 to 42 (IFFL…LSIF), 57 to 77 (IVLK…VILA), 112 to 132 (LIFG…GIWV), and 159 to 179 (FLSL…FFVV). Positions 223–322 (PPPYFPESSA…LGAPSDASPP (100 aa)) are disordered. Residues 228–241 (PESSAAAPSPGANS) show a composition bias toward low complexity. Polar residues-rich tracts occupy residues 242–267 (LHQI…NQGA) and 279–289 (ISGQGSSSERS).

The protein localises to the membrane. This Mus musculus (Mouse) protein is Transmembrane protein 171 (Tmem171).